We begin with the raw amino-acid sequence, 166 residues long: Small ribosomal subunit protein uS5 (166 aa).

The S5 DRBM domain maps to 11-74 (LQEKLIAVNR…EKARRNMINV (64 aa)).

Belongs to the universal ribosomal protein uS5 family. Part of the 30S ribosomal subunit. Contacts proteins S4 and S8.

Functionally, with S4 and S12 plays an important role in translational accuracy. Located at the back of the 30S subunit body where it stabilizes the conformation of the head with respect to the body. This Mannheimia succiniciproducens (strain KCTC 0769BP / MBEL55E) protein is Small ribosomal subunit protein uS5.